The primary structure comprises 298 residues: Zinc import ATP-binding protein ZnuC (298 aa).

One can recognise an ABC transporter domain in the interval 17-232 (IELRNAGVYR…PEYVRLFGSR (216 aa)). Residue 49 to 56 (GPNGAGKS) coordinates ATP. The disordered stretch occupies residues 273–298 (RGHCHVEDGHHHDHEHHHHEGGQPRA). Over residues 276–298 (CHVEDGHHHDHEHHHHEGGQPRA) the composition is skewed to basic and acidic residues.

It belongs to the ABC transporter superfamily. Zinc importer (TC 3.A.1.15.5) family. In terms of assembly, the complex is composed of two ATP-binding proteins (ZnuC), two transmembrane proteins (ZnuB) and a solute-binding protein (ZnuA).

It localises to the cell inner membrane. It carries out the reaction Zn(2+)(out) + ATP(in) + H2O(in) = Zn(2+)(in) + ADP(in) + phosphate(in) + H(+)(in). In terms of biological role, part of the ABC transporter complex ZnuABC involved in zinc import. Responsible for energy coupling to the transport system. This Brucella abortus (strain 2308) protein is Zinc import ATP-binding protein ZnuC.